Reading from the N-terminus, the 273-residue chain is MNNRVHQGHLARKRFGQNFLNDRFVIDSIVSAINPQKGQAMVEIGPGLAALTEPVGERLDKLTVIELDRDLAARLQTHPFLGPKLTIYQQDAMTMNFGELSTQLGQPLRVFGNLPYNISTPLMFHLFSYTDAIADMHFMLQKEVVNRLVAGPNSKAYGRLSVMAQYYCQVIPVLEVPPSAFTPPPKVDSAVVRLVPHATMPYPVKDIRVLSRITTEAFNQRRKTIRNSLGNLFSVETLTEMGIDPAMRAENISVAQYCQMANYLSENAPLKES.

Residues Asn-18, Leu-20, Gly-45, Glu-66, Asp-91, and Asn-113 each coordinate S-adenosyl-L-methionine.

Belongs to the class I-like SAM-binding methyltransferase superfamily. rRNA adenine N(6)-methyltransferase family. RsmA subfamily.

The protein resides in the cytoplasm. The enzyme catalyses adenosine(1518)/adenosine(1519) in 16S rRNA + 4 S-adenosyl-L-methionine = N(6)-dimethyladenosine(1518)/N(6)-dimethyladenosine(1519) in 16S rRNA + 4 S-adenosyl-L-homocysteine + 4 H(+). Its function is as follows. Specifically dimethylates two adjacent adenosines (A1518 and A1519) in the loop of a conserved hairpin near the 3'-end of 16S rRNA in the 30S particle. May play a critical role in biogenesis of 30S subunits. This chain is Ribosomal RNA small subunit methyltransferase A, found in Salmonella schwarzengrund (strain CVM19633).